A 1166-amino-acid chain; its full sequence is DNA-directed RNA polymerase subunit beta (1166 aa).

The protein belongs to the RNA polymerase beta chain family. As to quaternary structure, the RNAP catalytic core consists of 2 alpha, 1 beta, 1 beta' and 1 omega subunit. When a sigma factor is associated with the core the holoenzyme is formed, which can initiate transcription.

It carries out the reaction RNA(n) + a ribonucleoside 5'-triphosphate = RNA(n+1) + diphosphate. DNA-dependent RNA polymerase catalyzes the transcription of DNA into RNA using the four ribonucleoside triphosphates as substrates. This Nocardioides sp. (strain ATCC BAA-499 / JS614) protein is DNA-directed RNA polymerase subunit beta.